The following is a 588-amino-acid chain: DNA mismatch repair protein MutL (588 aa).

It belongs to the DNA mismatch repair MutL/HexB family.

Functionally, this protein is involved in the repair of mismatches in DNA. It is required for dam-dependent methyl-directed DNA mismatch repair. May act as a 'molecular matchmaker', a protein that promotes the formation of a stable complex between two or more DNA-binding proteins in an ATP-dependent manner without itself being part of a final effector complex. This Fervidobacterium nodosum (strain ATCC 35602 / DSM 5306 / Rt17-B1) protein is DNA mismatch repair protein MutL.